The primary structure comprises 323 residues: tRNA dimethylallyltransferase (323 aa).

12 to 19 (GPTAAGKT) lines the ATP pocket. 14–19 (TAAGKT) lines the substrate pocket. Interaction with substrate tRNA regions lie at residues 37-40 (DSAL) and 161-165 (QRLTR).

The protein belongs to the IPP transferase family. Monomer. It depends on Mg(2+) as a cofactor.

It catalyses the reaction adenosine(37) in tRNA + dimethylallyl diphosphate = N(6)-dimethylallyladenosine(37) in tRNA + diphosphate. Functionally, catalyzes the transfer of a dimethylallyl group onto the adenine at position 37 in tRNAs that read codons beginning with uridine, leading to the formation of N6-(dimethylallyl)adenosine (i(6)A). In Pseudomonas fluorescens (strain ATCC BAA-477 / NRRL B-23932 / Pf-5), this protein is tRNA dimethylallyltransferase.